Consider the following 460-residue polypeptide: Chromosomal replication initiator protein DnaA (460 aa).

The tract at residues 1 to 84 (MAVSLWQQCI…RFDIGSRPSA (84 aa)) is domain I, interacts with DnaA modulators. Residues 84–123 (AKKPEPAPVAAVRVPNPQTKASVGTSFNTTEPVANTNHRS) form a domain II region. The segment at 103-123 (KASVGTSFNTTEPVANTNHRS) is disordered. Positions 124-340 (NINPTYQFDN…GALNRVIANA (217 aa)) are domain III, AAA+ region. Gly-168, Gly-170, Lys-171, and Thr-172 together coordinate ATP. Residues 341-460 (NFTGRPITID…YANLIRTLSS (120 aa)) are domain IV, binds dsDNA.

The protein belongs to the DnaA family. Oligomerizes as a right-handed, spiral filament on DNA at oriC.

The protein resides in the cytoplasm. Plays an essential role in the initiation and regulation of chromosomal replication. ATP-DnaA binds to the origin of replication (oriC) to initiate formation of the DNA replication initiation complex once per cell cycle. Binds the DnaA box (a 9 base pair repeat at the origin) and separates the double-stranded (ds)DNA. Forms a right-handed helical filament on oriC DNA; dsDNA binds to the exterior of the filament while single-stranded (ss)DNA is stabiized in the filament's interior. The ATP-DnaA-oriC complex binds and stabilizes one strand of the AT-rich DNA unwinding element (DUE), permitting loading of DNA polymerase. After initiation quickly degrades to an ADP-DnaA complex that is not apt for DNA replication. Binds acidic phospholipids. The chain is Chromosomal replication initiator protein DnaA from Shewanella sp. (strain MR-4).